Reading from the N-terminus, the 81-residue chain is Dermaseptin-S6 (81 aa).

The signal sequence occupies residues 1–22; sequence MDILKKSLFFILFLGLVSLSIS. The segment at 22–49 is disordered; sequence SEEEKRENEDEEDQEDDEQSEEKRGLWS. A propeptide spanning residues 23–45 is cleaved from the precursor; that stretch reads EEEKRENEDEEDQEDDEQSEEKR. Over residues 30–41 the composition is skewed to acidic residues; that stretch reads EDEEDQEDDEQS. Ile78 is subject to Isoleucine amide. Residues 80–81 constitute a propeptide that is removed on maturation; that stretch reads EQ.

It belongs to the frog skin active peptide (FSAP) family. Dermaseptin subfamily. Expressed by the skin glands.

The protein resides in the secreted. Antimicrobial peptide. The sequence is that of Dermaseptin-S6 from Phyllomedusa sauvagei (Sauvage's leaf frog).